The chain runs to 330 residues: Diacylglycerol acyltransferase/mycolyltransferase Ag85B (330 aa).

Positions 1-40 (MTDLSKKVRAWGRRLLVGTAAAVTLPGLIGLAGGAPTAGA) are cleaved as a signal peptide. 82–83 (LR) contacts substrate. The fibronectin-binding stretch occupies residues 98–108 (FEWYYQSGLSI). Cys127 and Cys132 are disulfide-bonded. 2 residues coordinate substrate: Ser166 and Asp194. The active-site Nucleophile is the Ser166. Glu270 is a catalytic residue. Substrate-binding positions include 272-275 (FVRS), Lys279, and 302-304 (HSW). His302 is an active-site residue.

Belongs to the mycobacterial A85 antigen family.

The protein resides in the secreted. It catalyses the reaction 2 alpha,alpha'-trehalose 6-mycolate = alpha,alpha'-trehalose 6,6'-bismycolate + alpha,alpha-trehalose. The enzyme catalyses an acyl-CoA + a 1,2-diacyl-sn-glycerol = a triacyl-sn-glycerol + CoA. In terms of biological role, the antigen 85 proteins (FbpA, FbpB, FbpC) are responsible for the high affinity of mycobacteria for fibronectin, a large adhesive glycoprotein, which facilitates the attachment of M.tuberculosis to murine alveolar macrophages (AMs). They also help to maintain the integrity of the cell wall by catalyzing the transfer of mycolic acids to cell wall arabinogalactan and through the synthesis of alpha,alpha-trehalose dimycolate (TDM, cord factor). They catalyze the transfer of a mycoloyl residue from one molecule of alpha,alpha-trehalose monomycolate (TMM) to another TMM, leading to the formation of TDM. This is Diacylglycerol acyltransferase/mycolyltransferase Ag85B (fbpB) from Mycobacterium scrofulaceum.